The chain runs to 261 residues: uncharacterized protein (261 aa).

Positions 1 to 22 (MGYLKKVGMCISLLIVIIFVTS) are cleaved as a signal peptide. Cysteine 23 carries the N-palmitoyl cysteine lipid modification. Cysteine 23 carries S-diacylglycerol cysteine lipidation.

It belongs to the staphylococcal tandem lipoprotein family.

It localises to the cell membrane. This is an uncharacterized protein from Staphylococcus aureus (strain bovine RF122 / ET3-1).